Consider the following 120-residue polypeptide: uncharacterized protein (120 aa).

It to B.subtilis XkdH.

This is an uncharacterized protein from Bacillus subtilis (strain 168).